A 560-amino-acid chain; its full sequence is Phenol regulator MopR (560 aa).

Residues His-106 and Trp-134 each contribute to the phenol site. Residues Cys-155, Glu-178, Cys-181, and Cys-189 each contribute to the Zn(2+) site. Residues 245–474 (AVGESVAYRK…LENLLERATL (230 aa)) enclose the Sigma-54 factor interaction domain. ATP contacts are provided by residues 273–280 (GETGVGKE) and 336–345 (AHGGTIFLDE).

Homodimer.

Activity is triggered by phenol binding. Its function is as follows. Involved in the regulation of the phenol degradation pathway. Activates phenol hydroxylase expression in the presence of phenol. This Acinetobacter guillouiae (Acinetobacter genomosp. 11) protein is Phenol regulator MopR.